The following is an 88-amino-acid chain: Apolipoprotein C-I (88 aa).

Positions 1–26 are cleaved as a signal peptide; the sequence is MRLFLSLPVLVVVLAMVLEGPAPAQA.

The protein belongs to the apolipoprotein C1 family.

Its subcellular location is the secreted. Its function is as follows. Inhibitor of lipoprotein binding to the low density lipoprotein (LDL) receptor, LDL receptor-related protein, and very low density lipoprotein (VLDL) receptor. Associates with high density lipoproteins (HDL) and the triacylglycerol-rich lipoproteins in the plasma and makes up about 10% of the protein of the VLDL and 2% of that of HDL. Appears to interfere directly with fatty acid uptake and is also the major plasma inhibitor of cholesteryl ester transfer protein (CETP). Binds free fatty acids and reduces their intracellular esterification. Modulates the interaction of APOE with beta-migrating VLDL and inhibits binding of beta-VLDL to the LDL receptor-related protein. This chain is Apolipoprotein C-I (APOC1), found in Ailurus fulgens (Himalayan red panda).